The following is a 375-amino-acid chain: Succinyl-diaminopimelate desuccinylase (375 aa).

Zn(2+) is bound at residue His66. The active site involves Asp68. Asp99 lines the Zn(2+) pocket. The active-site Proton acceptor is the Glu133. The Zn(2+) site is built by Glu134, Glu162, and His348.

This sequence belongs to the peptidase M20A family. DapE subfamily. Homodimer. The cofactor is Zn(2+). Requires Co(2+) as cofactor.

It carries out the reaction N-succinyl-(2S,6S)-2,6-diaminopimelate + H2O = (2S,6S)-2,6-diaminopimelate + succinate. It functions in the pathway amino-acid biosynthesis; L-lysine biosynthesis via DAP pathway; LL-2,6-diaminopimelate from (S)-tetrahydrodipicolinate (succinylase route): step 3/3. Its function is as follows. Catalyzes the hydrolysis of N-succinyl-L,L-diaminopimelic acid (SDAP), forming succinate and LL-2,6-diaminopimelate (DAP), an intermediate involved in the bacterial biosynthesis of lysine and meso-diaminopimelic acid, an essential component of bacterial cell walls. The polypeptide is Succinyl-diaminopimelate desuccinylase (Shigella dysenteriae serotype 1 (strain Sd197)).